The chain runs to 59 residues: Large ribosomal subunit protein uL30 (59 aa).

The protein belongs to the universal ribosomal protein uL30 family. As to quaternary structure, part of the 50S ribosomal subunit.

This Enterobacter sp. (strain 638) protein is Large ribosomal subunit protein uL30.